The chain runs to 417 residues: Spermidine/putrescine import ATP-binding protein PotA (417 aa).

In terms of domain architecture, ABC transporter spans 5–308 (IILKDLTKVF…PANRFVAQFV (304 aa)). 37–44 (GPSGCGKT) contributes to the ATP binding site. Residues 105-177 (DFNSKIKDNL…TALKCKKINK (73 aa)) are insert.

The protein belongs to the ABC transporter superfamily. Spermidine/putrescine importer (TC 3.A.1.11.1) family. The complex is composed of two ATP-binding proteins (PotA), two transmembrane proteins (PotB and PotC) and a solute-binding protein (PotD).

It localises to the cell membrane. It catalyses the reaction ATP + H2O + polyamine-[polyamine-binding protein]Side 1 = ADP + phosphate + polyamineSide 2 + [polyamine-binding protein]Side 1.. In terms of biological role, part of the ABC transporter complex PotABCD involved in spermidine/putrescine import. Responsible for energy coupling to the transport system. The sequence is that of Spermidine/putrescine import ATP-binding protein PotA from Aster yellows witches'-broom phytoplasma (strain AYWB).